Consider the following 227-residue polypeptide: MTMTSTTTKAMAMAAAVLAAAAVAATNAQTCGKQNDGMICPHNLCCSQFGYCGLGRDYCGTGCQSGACCSSQRCGSQGGGATCSNNQCCSQYGYCGFGSEYCGSGCQNGPCRADIKCGRNANGELCPNNMCCSQWGYCGLGSEFCGNGCQSGACCPEKRCGKQAGGDKCPNNFCCSAGGYCGLGGNYCGSGCQSGGCYKGGDGMAAILANNQSVSFEGIIESVAELV.

Positions 1–28 (MTMTSTTTKAMAMAAAVLAAAAVAATNA) are cleaved as a signal peptide. A Pyrrolidone carboxylic acid modification is found at Q29. 4 consecutive Chitin-binding type-1 domains span residues 29-70 (QTCG…ACCS), 71-113 (SQRC…PCRA), 114-156 (DIKC…ACCP), and 157-199 (EKRC…GCYK). 16 disulfides stabilise this stretch: C31-C46, C40-C52, C45-C59, C63-C68, C74-C89, C83-C95, C88-C102, C106-C111, C117-C132, C126-C138, C131-C145, C149-C154, C160-C175, C169-C181, C174-C188, and C192-C197. Position 38–40 (38–40 (MIC)) interacts with substrate. 90-101 (SQYGYCGFGSEY) is a binding site for substrate. 142 to 143 (SE) serves as a coordination point for substrate. The propeptide occupies 202–227 (DGMAAILANNQSVSFEGIIESVAELV). N-linked (GlcNAc...) asparagine glycosylation occurs at N211.

In terms of tissue distribution, confined to root caps, several cell layers at the periphery of the coleorhiza and radicle, and in all cell layers of the coleoptile.

N-acetyl-D-glucosamine binding lectin. The protein is Lectin of Oryza sativa subsp. japonica (Rice).